The sequence spans 336 residues: Glyceraldehyde-3-phosphate dehydrogenase 1 (336 aa).

Residues 12–13 (RI), Asp34, and Ser120 each bind NAD(+). Residues 150–152 (SCT), Thr181, Arg198, 211–212 (TG), and Arg234 each bind D-glyceraldehyde 3-phosphate. Cys151 functions as the Nucleophile in the catalytic mechanism. Asn316 serves as a coordination point for NAD(+).

This sequence belongs to the glyceraldehyde-3-phosphate dehydrogenase family. In terms of assembly, homotetramer.

It is found in the cytoplasm. It catalyses the reaction D-glyceraldehyde 3-phosphate + phosphate + NAD(+) = (2R)-3-phospho-glyceroyl phosphate + NADH + H(+). Its pathway is carbohydrate degradation; glycolysis; pyruvate from D-glyceraldehyde 3-phosphate: step 1/5. Functionally, catalyzes the oxidative phosphorylation of glyceraldehyde 3-phosphate (G3P) to 1,3-bisphosphoglycerate (BPG) using the cofactor NAD. The first reaction step involves the formation of a hemiacetal intermediate between G3P and a cysteine residue, and this hemiacetal intermediate is then oxidized to a thioester, with concomitant reduction of NAD to NADH. The reduced NADH is then exchanged with the second NAD, and the thioester is attacked by a nucleophilic inorganic phosphate to produce BPG. This chain is Glyceraldehyde-3-phosphate dehydrogenase 1 (gapA1), found in Staphylococcus epidermidis (strain ATCC 35984 / DSM 28319 / BCRC 17069 / CCUG 31568 / BM 3577 / RP62A).